The primary structure comprises 177 residues: Protein C (177 aa).

Residues 1 to 10 show a composition bias toward polar residues; that stretch reads MSTKAWNASR. The interval 1 to 37 is disordered; that stretch reads MSTKAWNASRLSGPDPSTPWSLKKPLQHGSRPPKGKR.

It belongs to the morbillivirus protein C family.

This chain is Protein C (P/V/C), found in Bos indicus (Zebu).